The following is an 869-amino-acid chain: Translation initiation factor IF-2 (869 aa).

Disordered stretches follow at residues 51–78 (KQHG…NMGK) and 105–277 (EEET…SDLK). Residues 67–76 (QRKTTSTLNM) are compositionally biased toward polar residues. Low complexity predominate over residues 110 to 119 (RALAEQQAQL). Residues 120-241 (EAEKAAAEEA…KKQEAEEVHV (122 aa)) are compositionally biased toward basic and acidic residues. The 174-residue stretch at 369 to 542 (SRAPVVTIMG…ELLDLKAPPT (174 aa)) folds into the tr-type G domain. The segment at 378-385 (GHVDHGKT) is G1. Residue 378–385 (GHVDHGKT) participates in GTP binding. The segment at 403–407 (GITQH) is G2. The G3 stretch occupies residues 424-427 (DTPG). Residues 424–428 (DTPGH) and 478–481 (NKMD) each bind GTP. Residues 478 to 481 (NKMD) are G4. The tract at residues 514–516 (SAK) is G5.

This sequence belongs to the TRAFAC class translation factor GTPase superfamily. Classic translation factor GTPase family. IF-2 subfamily.

Its subcellular location is the cytoplasm. In terms of biological role, one of the essential components for the initiation of protein synthesis. Protects formylmethionyl-tRNA from spontaneous hydrolysis and promotes its binding to the 30S ribosomal subunits. Also involved in the hydrolysis of GTP during the formation of the 70S ribosomal complex. The chain is Translation initiation factor IF-2 from Pseudoalteromonas atlantica (strain T6c / ATCC BAA-1087).